Consider the following 30-residue polypeptide: Unknown protein from spot 365 of 2D-PAGE of etiolated coleoptile (30 aa).

It belongs to the zinc-containing alcohol dehydrogenase family.

The polypeptide is Unknown protein from spot 365 of 2D-PAGE of etiolated coleoptile (Zea mays (Maize)).